Consider the following 367-residue polypeptide: Alcohol dehydrogenase 2 (367 aa).

Zn(2+)-binding residues include Cys48, His74, Cys107, Cys110, Cys113, Cys121, and Cys163. Residues 187 to 193, Asp212, Lys216, 286 to 288, and Arg361 each bind NAD(+); these read GAGGGLG and VGI.

This sequence belongs to the zinc-containing alcohol dehydrogenase family. As to quaternary structure, homotetramer. Requires Zn(2+) as cofactor.

The protein localises to the cytoplasm. It catalyses the reaction a primary alcohol + NAD(+) = an aldehyde + NADH + H(+). The catalysed reaction is a secondary alcohol + NAD(+) = a ketone + NADH + H(+). The sequence is that of Alcohol dehydrogenase 2 (alcB) from Emericella nidulans (strain FGSC A4 / ATCC 38163 / CBS 112.46 / NRRL 194 / M139) (Aspergillus nidulans).